The primary structure comprises 557 residues: MEPAAEILVDSPDVVYSPETIEARYEYRTTRVSREGGVLRVQPRATRFTFRTARQVPRLGVMLVGWGGNNGSTLTAAVLANRLRLTWPTRTGRKEANYYGSLTQAGTVNLGLDENGREVFVPFSALLPMVAPNDLVFDGWDISSLNLAEAMRRAQVLDCGLQEQLWPHMESLRPRPSVYIPEFIAANQTARADNLIPGTRAQQLEQIRKDIRDFRSSAGLDKVIVLWTANTERFCEVVPGRNDTAENLLHTIQLGLEVSPSTLFAVASILEDCAFLNGSPQNTLVPGALELASQRHVFVGGDDFKSGQTKVKSVLVDFLIGSGLKTMSIVSYNHLGNNDGQNLSAPLQFRSKEVTKSSVVDDMVHSNHVLYAPGERPDHCVVIKYVPYVGDSKRALDEYTSELMLGGTNTLVLHNTCEDSLLAAPIMLDLVLLTELCQRVSFCTDSDPEPQGFHTVLSLLSFLFKAPLVPPGSPVVNALFRQRSCIENIFRACVGLPPQNHMLLEHKMERPGPGIKPGEVVATSPLPCKKEPTPATNGCTGDANGHPQAPTPKLSTA.

Residues Gly-67, Gly-68, Asn-69, Asn-70, Asp-141, Ser-177, Val-178, Gln-188, Arg-191, Thr-228, Ala-229, Asn-230, Thr-231, Gly-278, Ser-279, Asp-303, Ser-306, Asn-337, Asn-338, Asp-339, and Lys-352 each contribute to the NAD(+) site. At Ser-279 the chain carries Phosphoserine. Phosphoserine is present on Ser-357. Gly-390, Asp-391, Asp-419, and Ser-420 together coordinate NAD(+). The disordered stretch occupies residues Gly-512–Ala-557. Position 524 is a phosphoserine (Ser-524).

Belongs to the myo-inositol 1-phosphate synthase family. It depends on NAD(+) as a cofactor. In terms of tissue distribution, in testis, it is expressed in Sertoli cells. Highly expressed in 2 types of germ cells, pachytene spermatocytes and round spermatids.

Its subcellular location is the cytoplasm. It carries out the reaction D-glucose 6-phosphate = 1D-myo-inositol 3-phosphate. It functions in the pathway polyol metabolism; myo-inositol biosynthesis; myo-inositol from D-glucose 6-phosphate: step 1/2. In terms of biological role, key enzyme in myo-inositol biosynthesis pathway that catalyzes the conversion of glucose 6-phosphate to 1-myo-inositol 1-phosphate in a NAD-dependent manner. Rate-limiting enzyme in the synthesis of all inositol-containing compounds. The polypeptide is Inositol-3-phosphate synthase 1 (Isyna1) (Mus musculus (Mouse)).